The sequence spans 484 residues: Probable D-lactate dehydrogenase, mitochondrial (484 aa).

Residues 1 to 52 (MAMLLRVATQRLSPWRSFCSRGSQGGLSQDFVEALKAVVGSPHVSTASAVRE) constitute a mitochondrion transit peptide. Lys36 carries the N6-acetyllysine modification. The 181-residue stretch at 62–242 (RCQPPDAVVW…TSTTLRLHPA (181 aa)) folds into the FAD-binding PCMH-type domain. An N6-acetyllysine modification is found at Lys292. Position 335 is an N6-acetyllysine; alternate (Lys335). The residue at position 335 (Lys335) is an N6-succinyllysine; alternate. Lys422 and Lys449 each carry N6-acetyllysine.

Belongs to the FAD-binding oxidoreductase/transferase type 4 family. In terms of assembly, interacts with CSRP3. It depends on FAD as a cofactor. In terms of tissue distribution, readily detected in liver and kidney, with a weaker signal observed in heart, skeletal muscle, stomach, brain, and lung.

It is found in the mitochondrion. The catalysed reaction is (R)-lactate + 2 Fe(III)-[cytochrome c] = 2 Fe(II)-[cytochrome c] + pyruvate + 2 H(+). Its function is as follows. Involved in D-lactate, but not L-lactate catabolic process. The chain is Probable D-lactate dehydrogenase, mitochondrial from Mus musculus (Mouse).